Here is a 147-residue protein sequence, read N- to C-terminus: D-aminoacyl-tRNA deacylase (147 aa).

Residues 136–137 (GP) carry the Gly-cisPro motif, important for rejection of L-amino acids motif.

This sequence belongs to the DTD family. As to quaternary structure, homodimer.

The protein resides in the cytoplasm. The enzyme catalyses glycyl-tRNA(Ala) + H2O = tRNA(Ala) + glycine + H(+). It carries out the reaction a D-aminoacyl-tRNA + H2O = a tRNA + a D-alpha-amino acid + H(+). In terms of biological role, an aminoacyl-tRNA editing enzyme that deacylates mischarged D-aminoacyl-tRNAs. Also deacylates mischarged glycyl-tRNA(Ala), protecting cells against glycine mischarging by AlaRS. Acts via tRNA-based rather than protein-based catalysis; rejects L-amino acids rather than detecting D-amino acids in the active site. By recycling D-aminoacyl-tRNA to D-amino acids and free tRNA molecules, this enzyme counteracts the toxicity associated with the formation of D-aminoacyl-tRNA entities in vivo and helps enforce protein L-homochirality. In Streptococcus agalactiae serotype III (strain NEM316), this protein is D-aminoacyl-tRNA deacylase.